A 347-amino-acid polypeptide reads, in one-letter code: NADH-ubiquinone oxidoreductase chain 2 (347 aa).

10 helical membrane passes run 13–33 (IFTG…WVGL), 60–80 (FLTQ…NSML), 96–116 (LMIM…FWVP), 123–143 (PLMS…SIMY), 149–169 (LNVN…SWGG), 178–198 (ILAY…PYNP), 201–221 (TILN…LLNL), 247–267 (TLLS…WVII), 274–294 (NSLI…YFYL), and 326–346 (LPTL…MLMI).

The protein belongs to the complex I subunit 2 family. As to quaternary structure, core subunit of respiratory chain NADH dehydrogenase (Complex I) which is composed of 45 different subunits. Interacts with TMEM242.

The protein resides in the mitochondrion inner membrane. The enzyme catalyses a ubiquinone + NADH + 5 H(+)(in) = a ubiquinol + NAD(+) + 4 H(+)(out). Functionally, core subunit of the mitochondrial membrane respiratory chain NADH dehydrogenase (Complex I) which catalyzes electron transfer from NADH through the respiratory chain, using ubiquinone as an electron acceptor. Essential for the catalytic activity and assembly of complex I. The protein is NADH-ubiquinone oxidoreductase chain 2 of Pan troglodytes (Chimpanzee).